A 470-amino-acid polypeptide reads, in one-letter code: Nuclear receptor subfamily 0 group B member 1 (470 aa).

3 tandem repeats follow at residues 1–67, 68–133, and 134–200. A 4 X 67 AA tandem repeats region spans residues 1-253; it reads MAGENHQWQG…RPVALKNPQV (253 aa). Short sequence motifs (LXXLL motif) lie at residues 13 to 17, 80 to 84, and 146 to 150; these read LYNML, LYSML, and LYSLL. One copy of the 4; truncated repeat lies at 201 to 253; the sequence is FCGEDHPQQGSTLYCMPTSTNQAQAAPEERPRAPWWDTSSGALRPVALKNPQV. The NR LBD domain occupies 205-469; the sequence is DHPQQGSTLY…DMMLEMLCTK (265 aa). The short motif at 461–466 is the AF-2 motif element; that stretch reads MMLEML.

Belongs to the nuclear hormone receptor family. NR0 subfamily. As to quaternary structure, homodimer. Interacts with NR5A1, NR5A2, NR0B2 and with COPS2. Interacts with ESRRB; represses ESRRB activity at the GATA6 promoter.

Its subcellular location is the nucleus. The protein resides in the cytoplasm. Functionally, nuclear receptor that lacks a DNA-binding domain and acts as a corepressor that inhibits the transcriptional activity of other nuclear receptors through heterodimeric interactions. Component of a cascade required for the development of the hypothalamic-pituitary-adrenal-gonadal axis. May also have a role in the development of the embryo and in the maintenance of embryonic stem cell pluripotency. The polypeptide is Nuclear receptor subfamily 0 group B member 1 (NR0B1) (Macaca mulatta (Rhesus macaque)).